Reading from the N-terminus, the 200-residue chain is MPKIGMQSIRKQQLIQATLAVINEVGMQDASIALIARKAGVSNGIISHYFRDKNGLLEAAMRHIQYQLGFAVAMRLRILSDAEPKLRIQAIVDGNFDTSQTSETAMKTWLAFWASSMHQPNLHRLQKVNDRRLYSNLCYEFGRALTKDKARLAAKGLAALIDGLWLRSALSEEPFSLAEAKKITDEYIDMQLNLCQDKQT.

Residues 8–68 enclose the HTH tetR-type domain; the sequence is SIRKQQLIQA…AAMRHIQYQL (61 aa). A DNA-binding region (H-T-H motif) is located at residues 31-50; the sequence is SIALIARKAGVSNGIISHYF.

The protein operates within amine and polyamine biosynthesis; betaine biosynthesis via choline pathway [regulation]. In terms of biological role, repressor involved in the biosynthesis of the osmoprotectant glycine betaine. It represses transcription of the choline transporter BetT and the genes of BetAB involved in the synthesis of glycine betaine. The chain is HTH-type transcriptional regulator BetI from Proteus mirabilis (strain HI4320).